A 710-amino-acid polypeptide reads, in one-letter code: PWWP domain-containing DNA repair factor 3A (710 aa).

The interval 106–160 is disordered; the sequence is QESSAGTGRADRSLRGKPMEHVSSPCDSNSSSLPRGDVLGSSRPHRRRPCVQQSL. Residues 114-125 are compositionally biased toward basic and acidic residues; that stretch reads RADRSLRGKPME. Over residues 128–137 the composition is skewed to low complexity; the sequence is SSPCDSNSSS. Ser161 bears the Phosphoserine mark. Disordered regions lie at residues 177-204 and 230-398; these read KKGL…ESGS and NGSS…EEPP. The span at 288–297 shows a compositional bias: low complexity; sequence PSACSEPGEC. A phosphoserine mark is found at Ser374 and Ser375. The segment covering 375-385 has biased composition (polar residues); sequence SEESMGSNSMR. Residues 411–472 form the PWWP domain; sequence VGMLVWHKHK…KHFDCKEKQT (62 aa).

It belongs to the PWWP3A family. As to quaternary structure, interacts with TP53BP1 (via BRCT domain); the interaction is not dependent on its phosphorylation status. Binds nucleosomes. Interacts with trimethylated 'Lys-36' of histone H3 (H3K36me3) (in vitro).

The protein localises to the nucleus. In terms of biological role, involved in the DNA damage response pathway by contributing to the maintenance of chromatin architecture. Recruited to the vicinity of DNA breaks by TP53BP1 and plays an accessory role to facilitate damage-induced chromatin changes and promoting chromatin relaxation. Required for efficient DNA repair and cell survival following DNA damage. In Homo sapiens (Human), this protein is PWWP domain-containing DNA repair factor 3A.